Here is a 429-residue protein sequence, read N- to C-terminus: Adenylosuccinate synthetase (429 aa).

Residues 12–18 (GDEGKGK) and 40–42 (GHT) each bind GTP. Asp-13 acts as the Proton acceptor in catalysis. Residues Asp-13 and Gly-40 each coordinate Mg(2+). Residues 13-16 (DEGK), 38-41 (NAGH), Thr-129, Arg-143, Gln-224, Thr-239, and Arg-303 each bind IMP. His-41 acts as the Proton donor in catalysis. Position 299 to 305 (299 to 305 (VTTGRAR)) interacts with substrate. Residues Arg-305, 331–333 (KLD), and 413–415 (GVG) contribute to the GTP site.

The protein belongs to the adenylosuccinate synthetase family. Homodimer. Mg(2+) serves as cofactor.

The protein resides in the cytoplasm. It catalyses the reaction IMP + L-aspartate + GTP = N(6)-(1,2-dicarboxyethyl)-AMP + GDP + phosphate + 2 H(+). The protein operates within purine metabolism; AMP biosynthesis via de novo pathway; AMP from IMP: step 1/2. Functionally, plays an important role in the de novo pathway of purine nucleotide biosynthesis. Catalyzes the first committed step in the biosynthesis of AMP from IMP. The chain is Adenylosuccinate synthetase from Rhodococcus erythropolis (strain PR4 / NBRC 100887).